Reading from the N-terminus, the 310-residue chain is HTH-type transcriptional regulator PunR (310 aa).

Residues 2 to 59 enclose the HTH lysR-type domain; sequence WSEYSLEVVDAVARNGSFSAAAQELHRVPSAVSYTVRQLEEWLAVPLFERRHRDVELT. A DNA-binding region (H-T-H motif) is located at residues 19 to 38; sequence FSAAAQELHRVPSAVSYTVR.

Belongs to the LysR transcriptional regulatory family.

It is found in the cytoplasm. In terms of biological role, transcriptional regulator that activates the expression of punC, which encodes a purine nucleoside transporter. In Escherichia coli O157:H7, this protein is HTH-type transcriptional regulator PunR.